A 352-amino-acid chain; its full sequence is Uroporphyrinogen decarboxylase (352 aa).

Substrate-binding positions include 26 to 30 (RQAGR), Asp76, Tyr153, Ser208, and His323.

This sequence belongs to the uroporphyrinogen decarboxylase family. Homodimer.

Its subcellular location is the cytoplasm. The enzyme catalyses uroporphyrinogen III + 4 H(+) = coproporphyrinogen III + 4 CO2. It participates in porphyrin-containing compound metabolism; protoporphyrin-IX biosynthesis; coproporphyrinogen-III from 5-aminolevulinate: step 4/4. Its function is as follows. Catalyzes the decarboxylation of four acetate groups of uroporphyrinogen-III to yield coproporphyrinogen-III. This is Uroporphyrinogen decarboxylase from Prochlorococcus marinus (strain NATL2A).